The following is a 323-amino-acid chain: Digestive cysteine proteinase 2 (323 aa).

Positions 1 to 16 are cleaved as a signal peptide; that stretch reads MKVAVLFLCGVALAAA. The propeptide at 17–107 is activation peptide; that stretch reads SPSWEHFKGK…FYPKKETGPQ (91 aa). Intrachain disulfides connect Cys128–Cys171, Cys162–Cys204, and Cys263–Cys312. The active site involves Cys131. Active-site residues include His270 and Asn290.

This sequence belongs to the peptidase C1 family.

Inhibited by E-64, antipain, leupeptin, heavy metal ions, iodoacetic acid, dithionitrobenzene, p-hydroxymercuri-benzoate; activated by mercaptoethanol and dithiothreitol. The chain is Digestive cysteine proteinase 2 (LCP2) from Homarus americanus (American lobster).